We begin with the raw amino-acid sequence, 345 residues long: MTISPQDALTRCIEHREIFHDEMLHLMRLIMRGEMSPVIASALIMGLRVKKETIGEIAAAATVMREFATTVDVPAAILDHFVDIVGTGGDGANTFNISTASMFVAAAAGARIAKHGGRGVSSKSGSADVLEALGVNIMLTPEQVAQSIEAVGIGFMFAPNHHPAMKNVAPIRKELGVRTLFNILGPLTNPAGAPNILMGVFHPDLVGIQVRVMQRLGARHAVVVYGKDGMDEVSLGAATVVGELKDGEVREYEIHPEDYGLQMVSNRGLKVADAEESKAMLLGALENVPGTPREIVTLNAGAALYAANLAGSIGDGITLAREAIASGAARAKVDELVRVTNQFKK.

Residues Gly86, 89 to 90 (GD), Thr94, 96 to 99 (NIST), 114 to 122 (KHGGRGVSS), and Ser126 contribute to the 5-phospho-alpha-D-ribose 1-diphosphate site. Residue Gly86 participates in anthranilate binding. A Mg(2+)-binding site is contributed by Ser98. Arg172 lines the anthranilate pocket. Mg(2+) contacts are provided by Asp231 and Glu232.

Belongs to the anthranilate phosphoribosyltransferase family. In terms of assembly, homodimer. Mg(2+) serves as cofactor.

It carries out the reaction N-(5-phospho-beta-D-ribosyl)anthranilate + diphosphate = 5-phospho-alpha-D-ribose 1-diphosphate + anthranilate. It functions in the pathway amino-acid biosynthesis; L-tryptophan biosynthesis; L-tryptophan from chorismate: step 2/5. In terms of biological role, catalyzes the transfer of the phosphoribosyl group of 5-phosphorylribose-1-pyrophosphate (PRPP) to anthranilate to yield N-(5'-phosphoribosyl)-anthranilate (PRA). The chain is Anthranilate phosphoribosyltransferase 1 from Ralstonia nicotianae (strain ATCC BAA-1114 / GMI1000) (Ralstonia solanacearum).